A 513-amino-acid chain; its full sequence is GMP synthase [glutamine-hydrolyzing] (513 aa).

Residues 3 to 200 (SVLVLDFGSQ…LITIAGITPD (198 aa)) form the Glutamine amidotransferase type-1 domain. Cysteine 80 serves as the catalytic Nucleophile. Active-site residues include histidine 174 and glutamate 176. The 188-residue stretch at 201 to 388 (WSSKSFIEHQ…LGIAEDILMR (188 aa)) folds into the GMPS ATP-PPase domain. 228-234 (SGGVDST) contacts ATP.

As to quaternary structure, homodimer.

The catalysed reaction is XMP + L-glutamine + ATP + H2O = GMP + L-glutamate + AMP + diphosphate + 2 H(+). It functions in the pathway purine metabolism; GMP biosynthesis; GMP from XMP (L-Gln route): step 1/1. Its function is as follows. Catalyzes the synthesis of GMP from XMP. This Pelodictyon phaeoclathratiforme (strain DSM 5477 / BU-1) protein is GMP synthase [glutamine-hydrolyzing].